Consider the following 326-residue polypeptide: Heterodimeric geranylgeranyl pyrophosphate synthase small subunit, chloroplastic (326 aa).

The transit peptide at 1–33 directs the protein to the chloroplast; that stretch reads MLFSGSAIPLSSFCSLPEKPHTLPMKLSPAAIR. Isopentenyl diphosphate-binding residues include lysine 88 and histidine 120. Mg(2+) contacts are provided by aspartate 127 and aspartate 133. Arginine 138 is a binding site for dimethylallyl diphosphate. Arginine 139 contributes to the isopentenyl diphosphate binding site. 2 residues coordinate dimethylallyl diphosphate: lysine 220 and glutamine 258. Residues 274 to 301 are a coiled coil; sequence GAEKGMMEMAEELKEKAKKELQVFDNKY.

It belongs to the FPP/GGPP synthase family. Part of a heterodimeric geranyl(geranyl)diphosphate synthase. Interacts with GGPPS1 or GGPPS2, but not with GGPPS9. Interacts with LIL3.1 and LIL3.2. Mg(2+) serves as cofactor. As to expression, expressed ubiquitously.

Its subcellular location is the plastid. It localises to the chloroplast thylakoid membrane. Heterodimeric geranyl(geranyl)-diphosphate (GPP) synthase small subunit. The small subunit alone is inactive in vitro while the large subunit GGPPS1 catalyzes mainly the production of geranygeranyl-diphosphate in vitro. Upon association of the two subunits, the product profile changes and the production of gerany-diphosphate is strongly increased. In Arabidopsis thaliana (Mouse-ear cress), this protein is Heterodimeric geranylgeranyl pyrophosphate synthase small subunit, chloroplastic (GGR).